We begin with the raw amino-acid sequence, 387 residues long: Adaptive-response sensory kinase SasA (387 aa).

The segment at 1 to 97 is interacts with KaiC; that stretch reads MGESLSPQAL…TDQLANQLPQ (97 aa). In terms of domain architecture, Histidine kinase spans 158–382; the sequence is LVAHDLRNPL…TFHFTMPVYR (225 aa). Histidine 161 is subject to Phosphohistidine; by autocatalysis.

In terms of assembly, homooligomerizes. Part of the circadian clock (KaiA, KaiB, KaiC, CikA, RpaA, SasA), the composition of which varies during the circadian cycle. Binds to the CI domain of KaiC; KaiB(fs) and SasA compete for the binding site. Binds preferentially to doubly phosphorylated KaiC. Interacts with LdpA. In terms of processing, autophosphorylates in vitro.

It carries out the reaction ATP + protein L-histidine = ADP + protein N-phospho-L-histidine.. In terms of biological role, member of the two-component regulatory system SasA/RpaA involved in genome-wide circadian gene expression. One of three clock output pathways. Participates in the KaiABC clock protein complex, which constitutes the main circadian regulator in cyanobacteria, via its interaction with KaiC. Required for robustness of the circadian rhythm of gene expression and involved in clock output. KaiC enhances the autophosphorylation activity of SasA, which then transfers its phosphate group to RpaA to activate it. Phosphotransfer is maximal when KaiC phosphorylation is active during the circadian cycle; this two-component system is activated by fully phosphorylated KaiC. A very robust clock is reconstituted with KaiA, KaiB, KaiC, SasA, CikA and RpaA; output is measured by transcription from an appropriate reporter. In addition to its output function, recruits fold-shifted KaiB (KaiB(fs)) to KaiC to cooperatively form the KaiB(6):KaiC(6) complex (independent of SasA kinase activity); at physiological concentrations increases their association. At higher concentrations SasA and KaiB(fs) compete to bind to KaiC. Mutations that decrease cooperativity nearly phenocopy a deletion mutation. Its function is as follows. Autophosphorylation and phosphotransfer activities are not essential for clock rhythms in continuous light, but they are essential for adaptation to light/dark cycles. This is Adaptive-response sensory kinase SasA from Synechococcus elongatus (strain ATCC 33912 / PCC 7942 / FACHB-805) (Anacystis nidulans R2).